The following is a 193-amino-acid chain: Probable gluconokinase (193 aa).

21-28 (GPAGSGKT) provides a ligand contact to ATP.

This sequence belongs to the gluconokinase GntK/GntV family.

The enzyme catalyses D-gluconate + ATP = 6-phospho-D-gluconate + ADP + H(+). It participates in carbohydrate acid metabolism; D-gluconate degradation. This is Probable gluconokinase from Schizosaccharomyces pombe (strain 972 / ATCC 24843) (Fission yeast).